We begin with the raw amino-acid sequence, 131 residues long: Small ribosomal subunit protein bS6 (131 aa).

Positions 98–131 are disordered; the sequence is EASPMVKAKDERRERRDDFANETADDADAGDSEE. Positions 104–116 are enriched in basic and acidic residues; it reads KAKDERRERRDDF. Residues 120–131 are compositionally biased toward acidic residues; it reads TADDADAGDSEE.

It belongs to the bacterial ribosomal protein bS6 family.

Binds together with bS18 to 16S ribosomal RNA. In Citrobacter koseri (strain ATCC BAA-895 / CDC 4225-83 / SGSC4696), this protein is Small ribosomal subunit protein bS6.